Consider the following 778-residue polypeptide: NAD-dependent deacetylase sir2B (778 aa).

9 ANK repeats span residues 83-112, 114-142, 148-178, 191-221, 225-255, 260-289, 317-354, 358-390, and 394-423; these read LNWT…EISI, RYTA…VPNG, DMET…SMNS, HGVS…DINS, DNST…ELMN, YGNS…KIII, DGST…QVNG, GNAT…DPTI, and YGWT…LTNS. The tract at residues 438 to 458 is disordered; it reads SSTSTSSSSSSSSSSSSSSSS. The region spanning 465–778 is the Deacetylase sirtuin-type domain; sequence KEELKLKGIE…DYFNTLFNSF (314 aa). Histidine 608 functions as the Proton acceptor in the catalytic mechanism. Zn(2+) contacts are provided by cysteine 616, cysteine 619, cysteine 642, and cysteine 647. The tract at residues 727 to 746 is disordered; it reads KLKQQQENESGESSNDNDNN. Residues 733–746 show a composition bias toward low complexity; it reads ENESGESSNDNDNN.

Belongs to the sirtuin family. It depends on Zn(2+) as a cofactor.

The enzyme catalyses N(6)-acetyl-L-lysyl-[protein] + NAD(+) + H2O = 2''-O-acetyl-ADP-D-ribose + nicotinamide + L-lysyl-[protein]. In terms of biological role, NAD-dependent deacetylase, which plays an important role in the regulation of transcriptional repression. The sequence is that of NAD-dependent deacetylase sir2B (sir2B) from Dictyostelium discoideum (Social amoeba).